The chain runs to 135 residues: Lysozyme 2 (135 aa).

The N-terminal stretch at 1 to 18 (MNFLILFCVVASASVVYS) is a signal peptide. The I-type lysozyme domain occupies 19 to 135 (SISDQCLRCI…WRLVQAKGCS (117 aa)). Intrachain disulfides connect Cys24–Cys100, Cys29–Cys35, Cys40–Cys49, Cys62–Cys82, Cys72–Cys78, and Cys96–Cys114. Glu32 acts as the Proton donor in catalysis. The Nucleophile role is filled by Asp43. A substrate-binding site is contributed by 55-61 (KQGYWTD). Substrate contacts are provided by residues Tyr86 and 107–109 (HNG).

As to expression, expressed in the epithelia of the basophil cells in the digestive tubules, but not in the epithelial cells lining the digestive ducts and stomach. Expressed at a much lower level in the style sac-midgut tissues. No expression detected in mantle, gills, labial palps or hemocytes.

It localises to the secreted. The catalysed reaction is Hydrolysis of (1-&gt;4)-beta-linkages between N-acetylmuramic acid and N-acetyl-D-glucosamine residues in a peptidoglycan and between N-acetyl-D-glucosamine residues in chitodextrins.. Activity decreased by 80% by addition of 0.01 M calcium, zinc or magnesium. Activity only decreased by 17% by addition of ammonium, and by 2% by addition of sodium. Its function is as follows. The main role of this lysozyme is in digestion. Has antibacterial activity against the Gram-positive bacterium P.cerevisiae and the Gram-negative bacteria E.coli and V.vulnificus. Shows some chitinase activity but no isopeptidase activity. The protein is Lysozyme 2 of Crassostrea virginica (Eastern oyster).